A 377-amino-acid polypeptide reads, in one-letter code: Terpene synthase 1 (377 aa).

The DDxx(x)D/E motif motif lies at 81–86; the sequence is DDALDA. Residues 221–229 carry the NDxxSxxxD/E motif motif; that stretch reads NDLVSYEKE. The segment at 326 to 359 is disordered; it reads RKQSSSPNLTNSISIPTNNTNNSNNITSSPNKKQ. Residues 335–356 show a composition bias toward low complexity; the sequence is TNSISIPTNNTNNSNNITSSPN.

This sequence belongs to the terpene synthase family.

It carries out the reaction (2E,6E)-farnesyl diphosphate = (2S,3R,6S,9S)-(-)-protoillud-7-ene + diphosphate. Terpene synthase that converts its substrate farnesyl diphosphate (FPP) into the sesquiterpene protoillud-7-ene. The protein is Terpene synthase 1 of Dictyostelium purpureum (Slime mold).